Here is a 461-residue protein sequence, read N- to C-terminus: Ribonuclease inhibitor (461 aa).

S2 carries the post-translational modification N-acetylserine. Residues 2-11 form a 2 X 5 AA tandem repeats of S-L-D-I-Q region; the sequence is SLDIQSLDIQ. LRR repeat units follow at residues 20 to 48, 49 to 76, 77 to 105, 106 to 133, 134 to 162, 163 to 190, 191 to 219, 220 to 247, 248 to 276, 277 to 304, 305 to 333, 334 to 361, 362 to 390, 391 to 418, and 419 to 447; these read WAELLPLLQQCQVVRLDDCGLTEARCKDI, SSALRVNPALAELNLRSNELGDVGVHCV, LQGLQTPSCKIQKLSLQNCCLTGAGCGVL, SSTLRTLPTLQELHLSDNLLGDAGLQLL, CEGLLDPQCRLEKLQLEYCSLSAASCEPL, ASVLRAKPDFKELTVSNNDINEAGVRVL, CQGLKDSPCQLEALKLESCGVTSDNCRDL, CGIVASKASLRELALGSNKLGDVGMAEL, CPGLLHPSSRLRTLWIWECGITAKGCGDL, CRVLRAKESLKELSLAGNELGDEGARLL, CETLLEPGCQLESLWVKSCSFTAACCSHF, SSVLAQNRFLLELQISNNRLEDAGVREL, CQGLGQPGSVLRVLWLADCDVSDSSCSSL, AATLLANHSLRELDLSNNCLGDAGILQL, and VESVRQPGCLLEQLVLYDIYWSEEMEDRL. At T82 the chain carries Phosphothreonine. A Phosphoserine modification is found at S91.

As to quaternary structure, forms high-affinity heterodimers with RNASE1, ANG and RNASE2. Post-translationally, the N-terminus is blocked. At least 30 of the 32 cysteine residues are in the reduced form.

The protein localises to the cytoplasm. It is found in the nucleus. Functionally, ribonuclease inhibitor which inhibits RNASE1, RNASE2 and angiogenin (ANG). May play a role in redox homeostasis. Required to inhibit the cytotoxic tRNA ribonuclease activity of ANG in the cytoplasm in absence of stress. Relocates to the nucleus in response to stress, relieving inhibition of ANG in the cytoplasm, and inhibiting the angiogenic activity of ANG in the nucleus. This Homo sapiens (Human) protein is Ribonuclease inhibitor.